Consider the following 474-residue polypeptide: 6-phospho-beta-galactosidase (474 aa).

D-galactose 6-phosphate-binding residues include glutamine 19, histidine 116, asparagine 159, glutamate 160, and asparagine 297. Glutamate 160 functions as the Proton donor in the catalytic mechanism. Glutamate 375 serves as the catalytic Nucleophile. D-galactose 6-phosphate is bound by residues serine 433, tryptophan 434, lysine 440, and tyrosine 442.

This sequence belongs to the glycosyl hydrolase 1 family.

It carries out the reaction a 6-phospho-beta-D-galactoside + H2O = D-galactose 6-phosphate + an alcohol. It participates in carbohydrate metabolism; lactose degradation; D-galactose 6-phosphate and beta-D-glucose from lactose 6-phosphate: step 1/1. This is 6-phospho-beta-galactosidase from Lacticaseibacillus casei (strain BL23) (Lactobacillus casei).